A 128-amino-acid polypeptide reads, in one-letter code: Fluoride-specific ion channel FluC (128 aa).

The next 4 membrane-spanning stretches (helical) occupy residues 6–26 (LVAL…GLVL), 36–56 (LPTF…AGLA), 68–88 (VLLF…GLET), and 99–119 (IAAA…WLGF). Positions 76 and 79 each coordinate Na(+).

Belongs to the fluoride channel Fluc/FEX (TC 1.A.43) family.

The protein resides in the cell inner membrane. The enzyme catalyses fluoride(in) = fluoride(out). Its activity is regulated as follows. Na(+) is not transported, but it plays an essential structural role and its presence is essential for fluoride channel function. In terms of biological role, fluoride-specific ion channel. Important for reducing fluoride concentration in the cell, thus reducing its toxicity. This Methylobacillus flagellatus (strain ATCC 51484 / DSM 6875 / VKM B-1610 / KT) protein is Fluoride-specific ion channel FluC.